Reading from the N-terminus, the 610-residue chain is GATOR complex protein NPRL3 (610 aa).

Ser437 is subject to Phosphoserine. The tract at residues 474–501 is disordered; that stretch reads REASEDHSSLASDNIAVQPSSSHKSNFS. The segment covering 482-501 has biased composition (polar residues); the sequence is SLASDNIAVQPSSSHKSNFS.

Belongs to the NPR3 family. In terms of assembly, component of the GATOR complex consisting of mio, Nup44A/Seh1, Im11, Nplr3, Nplr2, Wdr24, Wdr59 and Sec13. Within the GATOR complex, probable component of the GATOR1 subcomplex which is likely composed of Iml1, Nplr2 and Nplr3. Interacts with Nprl2.

Its subcellular location is the cytoplasm. It localises to the lysosome. In terms of biological role, an essential component of the GATOR subcomplex GATOR1 which functions as an inhibitor of the amino acid-sensing branch of the TORC1 signaling pathway. The two GATOR subcomplexes, GATOR1 and GATOR2, regulate the TORC1 pathway in order to mediate metabolic homeostasis, female gametogenesis and the response to amino acid limitation and complete starvation. The function of GATOR1 in negatively regulating the TORC1 pathway is essential for maintaining baseline levels of TORC1 activity under nutrient rich conditions, and for promoting survival during amino acid or complete starvation by inhibiting TORC1-dependent cell growth and promoting catabolic metabolism and autophagy. In addition, this inhibition of TORC1 is necessary to maintain female fertility under normal conditions and during periods of nutrient stress. GATOR1 and GATOR2 act at different stages of oogenesis to regulate TORC1 in order to control meiotic entry and promote oocyte growth and development. After exactly four mitotic cyst divisions, the GATOR1 complex members (Iml1, Nprl2 and Nprl3) down-regulate TORC1 to slow cellular metabolism and promote the mitotic/meiotic transition. At later stages of oogenesis, the mio and Nup44A components of the GATOR2 complex inhibit GATOR1 and thus activate TORC1 to promote meiotic progression, and drive oocyte growth and development. This Drosophila melanogaster (Fruit fly) protein is GATOR complex protein NPRL3.